Consider the following 142-residue polypeptide: FAD synthase (142 aa).

Residues 9 to 10 (VF), 14 to 17 (HLGH), Asp93, and Tyr120 each bind ATP.

It belongs to the archaeal FAD synthase family. In terms of assembly, homodimer. The cofactor is a divalent metal cation.

The catalysed reaction is FMN + ATP + H(+) = FAD + diphosphate. It functions in the pathway cofactor biosynthesis; FAD biosynthesis; FAD from FMN: step 1/1. In terms of biological role, catalyzes the transfer of the AMP portion of ATP to flavin mononucleotide (FMN) to produce flavin adenine dinucleotide (FAD) coenzyme. The protein is FAD synthase (ribL) of Thermoplasma volcanium (strain ATCC 51530 / DSM 4299 / JCM 9571 / NBRC 15438 / GSS1).